The following is a 545-amino-acid chain: Membrane protein insertase YidC (545 aa).

The next 6 helical transmembrane spans lie at alanine 10–serine 30, leucine 319–proline 339, tryptophan 341–phenylalanine 361, leucine 407–valine 427, isoleucine 467–serine 487, and methionine 502–isoleucine 522.

The protein belongs to the OXA1/ALB3/YidC family. Type 1 subfamily. As to quaternary structure, interacts with the Sec translocase complex via SecD. Specifically interacts with transmembrane segments of nascent integral membrane proteins during membrane integration.

It localises to the cell inner membrane. Its function is as follows. Required for the insertion and/or proper folding and/or complex formation of integral membrane proteins into the membrane. Involved in integration of membrane proteins that insert both dependently and independently of the Sec translocase complex, as well as at least some lipoproteins. Aids folding of multispanning membrane proteins. The chain is Membrane protein insertase YidC from Borrelia hermsii (strain HS1 / DAH).